A 266-amino-acid polypeptide reads, in one-letter code: 2-dehydro-3-deoxy-D-gluconate/2-dehydro-3-deoxy-phosphogluconate aldolase (266 aa).

Substrate is bound by residues Ser-36–Thr-37, Tyr-123–Ile-125, and Lys-151–Ser-153. Lys-151 functions as the Schiff-base intermediate with substrate in the catalytic mechanism.

Belongs to the DapA family. KDPG aldolase subfamily. In terms of assembly, homotetramer; dimer of dimers.

The enzyme catalyses 2-dehydro-3-deoxy-6-phospho-D-gluconate = D-glyceraldehyde 3-phosphate + pyruvate. The catalysed reaction is 2-dehydro-3-deoxy-D-gluconate = D-glyceraldehyde + pyruvate. It carries out the reaction 2-dehydro-3-deoxy-6-phospho-D-galactonate = D-glyceraldehyde 3-phosphate + pyruvate. It catalyses the reaction 2-dehydro-3-deoxy-D-galactonate = D-glyceraldehyde + pyruvate. Its pathway is carbohydrate acid metabolism; 2-dehydro-3-deoxy-D-gluconate degradation; D-glyceraldehyde 3-phosphate and pyruvate from 2-dehydro-3-deoxy-D-gluconate: step 2/2. In terms of biological role, involved in the degradation of glucose via the Entner-Doudoroff pathway. Catalyzes the reversible cleavage of 2-keto-3-deoxy-6-phosphogluconate (KDPG) and 2-keto-3-deoxygluconate (KDG) forming pyruvate and glyceraldehyde 3-phosphate or glyceraldehyde, respectively. It is also able to catalyze the reversible cleavage of 2-keto-3-deoxy-6-phosphogalactonate (KDPGal) and 2-keto-3-deoxygalactonate (KDGal). It is equally active with both D- and L-glyceraldehyde. The protein is 2-dehydro-3-deoxy-D-gluconate/2-dehydro-3-deoxy-phosphogluconate aldolase of Picrophilus torridus (strain ATCC 700027 / DSM 9790 / JCM 10055 / NBRC 100828 / KAW 2/3).